Consider the following 349-residue polypeptide: Mitochondrial carrier protein SCaMC-3L (349 aa).

The next 4 membrane-spanning stretches (helical) occupy residues 88–104 (GALW…GAVS), 149–168 (GNGI…FSVF), 188–205 (LLAG…INPM), and 243–261 (YLPN…LAVY). Solcar repeat units follow at residues 88–174 (GALW…CKNY) and 182–267 (PPFQ…LNCL).

The protein belongs to the mitochondrial carrier (TC 2.A.29) family.

It localises to the mitochondrion inner membrane. It carries out the reaction Mg(2+)(out) + phosphate(in) + ATP(out) = Mg(2+)(in) + phosphate(out) + ATP(in). The enzyme catalyses ADP(out) + phosphate(in) + H(+)(out) = ADP(in) + phosphate(out) + H(+)(in). Functionally, calcium-independent ATP-Mg/Pi exchanger that catalyzes the electroneutral exchange of Mg-ATP or free ADP against an hydrogenphosphate and participates in the net transport of adenine nucleotides across the mitochondria inner membrane. The chain is Mitochondrial carrier protein SCaMC-3L from Bos taurus (Bovine).